A 157-amino-acid chain; its full sequence is DNA-binding protein MNB1B (157 aa).

3 disordered regions span residues Met1 to Pro45, Phe59 to Asp87, and Tyr109 to Glu157. 2 stretches are compositionally biased toward basic and acidic residues: residues Ala10–Ala27 and Ala76–Asp87. Positions Pro41–Asn110 form a DNA-binding region, HMG box. 2 stretches are compositionally biased toward acidic residues: residues Glu124–Ser133 and Asn141–Glu157. Ser149 carries the phosphoserine; by CK2 modification.

In terms of tissue distribution, expressed in all tissues examined.

It localises to the nucleus. Recognizes an AAGG motif at the MNF1-binding site. The chain is DNA-binding protein MNB1B (MNB1B) from Zea mays (Maize).